A 631-amino-acid polypeptide reads, in one-letter code: Phosphomethylpyrimidine synthase (631 aa).

Residues Asn239, Met268, Tyr297, His333, 353–355, 394–397, and Glu433 contribute to the substrate site; these read SRG and DGLR. His437 serves as a coordination point for Zn(2+). Residue Tyr460 participates in substrate binding. Zn(2+) is bound at residue His501. Residues Cys581, Cys584, and Cys589 each coordinate [4Fe-4S] cluster.

It belongs to the ThiC family. As to quaternary structure, homodimer. It depends on [4Fe-4S] cluster as a cofactor.

The catalysed reaction is 5-amino-1-(5-phospho-beta-D-ribosyl)imidazole + S-adenosyl-L-methionine = 4-amino-2-methyl-5-(phosphooxymethyl)pyrimidine + CO + 5'-deoxyadenosine + formate + L-methionine + 3 H(+). It functions in the pathway cofactor biosynthesis; thiamine diphosphate biosynthesis. Functionally, catalyzes the synthesis of the hydroxymethylpyrimidine phosphate (HMP-P) moiety of thiamine from aminoimidazole ribotide (AIR) in a radical S-adenosyl-L-methionine (SAM)-dependent reaction. This Shigella sonnei (strain Ss046) protein is Phosphomethylpyrimidine synthase.